The chain runs to 121 residues: Large ribosomal subunit protein uL18 (121 aa).

Belongs to the universal ribosomal protein uL18 family. As to quaternary structure, part of the 50S ribosomal subunit; part of the 5S rRNA/L5/L18/L25 subcomplex. Contacts the 5S and 23S rRNAs.

Functionally, this is one of the proteins that bind and probably mediate the attachment of the 5S RNA into the large ribosomal subunit, where it forms part of the central protuberance. The chain is Large ribosomal subunit protein uL18 from Spiroplasma kunkelii.